The sequence spans 830 residues: Ent-cassa-12,15-diene synthase (830 aa).

The tract at residues 1 to 50 is disordered; sequence MMLLGSPSSGGYGGKFAGASPAGGTTTMAPSAKQPSSRAPPPGITGGRND. A compositionally biased stretch (polar residues) spans 23 to 37; sequence GGTTTMAPSAKQPSS. Mg(2+)-binding residues include aspartate 577, aspartate 581, asparagine 721, and glutamate 729. A DDXXD motif motif is present at residues 577–581; it reads DDLFD.

This sequence belongs to the terpene synthase family. It depends on Mg(2+) as a cofactor. As to expression, expressed in roots and stems.

The catalysed reaction is ent-copalyl diphosphate = ent-cassa-12,15-diene + diphosphate. Its function is as follows. Involved in phytocassane phytoalexins biosynthesis. Catalyzes the conversion of ent-copalyl diphosphate to the phytoalexin precursor ent-cassa-12,15-diene. This is Ent-cassa-12,15-diene synthase (KSL7) from Oryza sativa subsp. indica (Rice).